Consider the following 1126-residue polypeptide: DNA-directed RNA polymerase subunit Rpo2 (1126 aa).

Positions 1060, 1063, 1078, and 1081 each coordinate Zn(2+).

The protein belongs to the RNA polymerase beta chain family. Part of the 13-subunit RNA polymerase complex. Interacts with TFS4. In terms of assembly, (Microbial infection) Binds viral protein RIP which blocks global transcription. It depends on Zn(2+) as a cofactor.

Its subcellular location is the cytoplasm. The enzyme catalyses RNA(n) + a ribonucleoside 5'-triphosphate = RNA(n+1) + diphosphate. Its function is as follows. DNA-dependent RNA polymerase (RNAP) catalyzes the transcription of DNA into RNA using the four ribonucleoside triphosphates as substrates. This subunit is involved in DNA promoter recognition. The polypeptide is DNA-directed RNA polymerase subunit Rpo2 (Sulfolobus acidocaldarius (strain ATCC 33909 / DSM 639 / JCM 8929 / NBRC 15157 / NCIMB 11770)).